An 870-amino-acid polypeptide reads, in one-letter code: Leucine--tRNA ligase (870 aa).

The short motif at 36-46 is the 'HIGH' region element; sequence PYPSGKIHLGH. Positions 602-606 match the 'KMSKS' region motif; it reads KMSKS. Lysine 605 contributes to the ATP binding site.

Belongs to the class-I aminoacyl-tRNA synthetase family.

It is found in the cytoplasm. The enzyme catalyses tRNA(Leu) + L-leucine + ATP = L-leucyl-tRNA(Leu) + AMP + diphosphate. In Rickettsia akari (strain Hartford), this protein is Leucine--tRNA ligase.